We begin with the raw amino-acid sequence, 323 residues long: E3 ubiquitin-protein ligase makorin (323 aa).

2 C3H1-type zinc fingers span residues 1–28 and 29–56; these read MSDRILCKFFVHGSCLKGENCEFSHDSK and DPPNNVCTFYQKRICLYGSRCRYDHVRA. Positions 62–74 are enriched in low complexity; it reads LSSDSESLDRSIS. Residues 62–92 are disordered; that stretch reads LSSDSESLDRSISTTPSRHLQQQGDNNDGDK. Over residues 75–87 the composition is skewed to polar residues; that stretch reads TTPSRHLQQQGDN. The C3H1-type 3 zinc-finger motif lies at 101 to 128; it reads PREYPICSFAAAGDCPRGNQCPHMHGDL. The makorin-type Cys-His stretch occupies residues 129-158; sequence CNTCGKKCLHPFRPEEREEHTKECEKKQKH. The RING-type zinc finger occupies 170–228; the sequence is CSVCLDRILSKATPGERKFGLLTECDHPFCIQCIRNWRSSAPVSGMDVNSTLRACPICR. The C3H1-type 4 zinc-finger motif lies at 257-286; the sequence is KLRSIDCKHFNFGNGNCPFGASCFYKHAYS.

It catalyses the reaction S-ubiquitinyl-[E2 ubiquitin-conjugating enzyme]-L-cysteine + [acceptor protein]-L-lysine = [E2 ubiquitin-conjugating enzyme]-L-cysteine + N(6)-ubiquitinyl-[acceptor protein]-L-lysine.. It functions in the pathway protein modification; protein ubiquitination. E3 ubiquitin ligase catalyzing the covalent attachment of ubiquitin moieties onto substrate proteins. This Arabidopsis thaliana (Mouse-ear cress) protein is E3 ubiquitin-protein ligase makorin (MKRN).